The primary structure comprises 640 residues: Fructose-1,6-bisphosphatase class 3 (640 aa).

It belongs to the FBPase class 3 family. Mn(2+) serves as cofactor.

It catalyses the reaction beta-D-fructose 1,6-bisphosphate + H2O = beta-D-fructose 6-phosphate + phosphate. It participates in carbohydrate biosynthesis; gluconeogenesis. The chain is Fructose-1,6-bisphosphatase class 3 from Lactococcus lactis subsp. lactis (strain IL1403) (Streptococcus lactis).